Here is a 359-residue protein sequence, read N- to C-terminus: Outer membrane protein P5 (359 aa).

A signal peptide spans 1-21 (MKKTAIALVVAGLAAASVAQA). The next 8 beta stranded transmembrane spans lie at 27–37 (TFYAGVKAGQG), 64–75 (TFTYGVFGGYQI), 83–91 (LAAELGYDD), 110–121 (HGAYLSLKGSYE), 126–134 (LDVYGKAGV), 164–173 (GLFAVGAEYA), 178–185 (LAVRLEYQ), and 211–219 (CINAGISYR). The OmpA-like domain occupies 233–359 (MVSKTFSLNS…RVEIAVNGTK (127 aa)). C332 and C344 form a disulfide bridge.

This sequence belongs to the outer membrane OOP (TC 1.B.6) superfamily. OmpA family. In terms of assembly, monomer and homodimer.

It localises to the cell outer membrane. It is found in the fimbrium. Functionally, acts as a fimbriae subunit, allowing adhesion to host cells. In terms of biological role, with TolR probably plays a role in maintaining the position of the peptidoglycan cell wall in the periplasm. Acts as a porin with low permeability that allows slow penetration of small solutes; an internal gate slows down solute passage. This Haemophilus influenzae protein is Outer membrane protein P5.